Here is a 466-residue protein sequence, read N- to C-terminus: Probable Xaa-Pro aminopeptidase pepP (466 aa).

Asp264, Asp275, Glu398, and Glu438 together coordinate Mn(2+).

It belongs to the peptidase M24B family. Mn(2+) is required as a cofactor.

The enzyme catalyses Release of any N-terminal amino acid, including proline, that is linked to proline, even from a dipeptide or tripeptide.. Its function is as follows. Catalyzes the removal of a penultimate prolyl residue from the N-termini of peptides. In Aspergillus terreus (strain NIH 2624 / FGSC A1156), this protein is Probable Xaa-Pro aminopeptidase pepP (pepP).